A 364-amino-acid chain; its full sequence is Glutamine synthetase (364 aa).

Residues 15–94 (VLAEYIWIDA…VLAECWNNDG (80 aa)) enclose the GS beta-grasp domain. Residues 101 to 364 (HRHECAKLMS…ETKRGEEEGF (264 aa)) enclose the GS catalytic domain.

This sequence belongs to the glutamine synthetase family. As to quaternary structure, homooctamer.

The protein resides in the cytoplasm. It carries out the reaction L-glutamate + NH4(+) + ATP = L-glutamine + ADP + phosphate + H(+). In Yarrowia lipolytica (strain CLIB 122 / E 150) (Yeast), this protein is Glutamine synthetase (GLN1).